We begin with the raw amino-acid sequence, 64 residues long: Large ribosomal subunit protein bL35 (64 aa).

Belongs to the bacterial ribosomal protein bL35 family.

The polypeptide is Large ribosomal subunit protein bL35 (Shewanella putrefaciens (strain CN-32 / ATCC BAA-453)).